Reading from the N-terminus, the 1216-residue chain is 1-phosphatidylinositol 4,5-bisphosphate phosphodiesterase beta-1 (1216 aa).

A lipid anchor (S-palmitoyl cysteine) is attached at Cys17. Residue Ser236 is modified to Phosphoserine. The 152-residue stretch at 316–467 (EDMSQPLSHY…LMYKILVKNK (152 aa)) folds into the PI-PLC X-box domain. Active-site residues include His331 and His378. Ser417 carries the post-translational modification Phosphoserine. A disordered region spans residues 469–534 (KSHKSSEGSG…MDEGTAGSEA (66 aa)). Residues 472–483 (KSSEGSGKKKLS) are compositionally biased toward basic and acidic residues. The segment covering 491–501 (SDSSSVFEPSS) has biased composition (low complexity). Positions 507–518 (ADTESDDDDDDD) are enriched in acidic residues. Thr509 carries the phosphothreonine modification. Phosphoserine occurs at positions 511 and 582. The PI-PLC Y-box domain maps to 540-656 (MSNLVNYIQP…GYRLKPEFMR (117 aa)). Residues 656-786 (RRPDKHFDPF…RNERNQPLTL (131 aa)) enclose the C2 domain. 4 disordered regions span residues 834 to 891 (DEEE…VKAP), 967 to 989 (EKSA…GSSA), 1072 to 1095 (MDKK…EEEK), and 1173 to 1216 (ISED…DTPL). Polar residues predominate over residues 846–868 (ETSSEAPSETRTTPAENGVNHTA). Ser887 is subject to Phosphoserine; by PKC. Basic and acidic residues predominate over residues 967 to 979 (EKSAKKDSKKKSE). Phosphoserine occurs at positions 978 and 987. Positions 1075–1095 (KRQEKITEAKSKDKSQMEEEK) are enriched in basic and acidic residues. Ser1197, Ser1199, and Ser1200 each carry phosphoserine. Basic and acidic residues predominate over residues 1205 to 1216 (RENPGREFDTPL).

In terms of assembly, interacts with DGKQ. Ca(2+) serves as cofactor. In terms of processing, palmitoylated. Palmitoylation at Cys-17 by ZDHHC21 regulates the signaling activity of PLCB1 and the function of the endothelial barrier. Palmitoylation by ZDHHC21 is stimulated by inflammation.

Its subcellular location is the nucleus membrane. It is found in the cytoplasm. It carries out the reaction a 1,2-diacyl-sn-glycero-3-phospho-(1D-myo-inositol-4,5-bisphosphate) + H2O = 1D-myo-inositol 1,4,5-trisphosphate + a 1,2-diacyl-sn-glycerol + H(+). The enzyme catalyses a 1,2-diacyl-sn-glycero-3-phospho-(1D-myo-inositol) + H2O = 1D-myo-inositol 1-phosphate + a 1,2-diacyl-sn-glycerol + H(+). Catalyzes the hydrolysis of 1-phosphatidylinositol 4,5-bisphosphate into diacylglycerol (DAG) and inositol 1,4,5-trisphosphate (IP3) and mediates intracellular signaling downstream of G protein-coupled receptors. Regulates the function of the endothelial barrier. This chain is 1-phosphatidylinositol 4,5-bisphosphate phosphodiesterase beta-1, found in Mus musculus (Mouse).